We begin with the raw amino-acid sequence, 606 residues long: NADH-ubiquinone oxidoreductase chain 5 (606 aa).

16 consecutive transmembrane segments (helical) span residues 4–24 (FPSL…TTTI), 38–58 (NIIS…IHSG), 87–107 (MIFV…SMWY), 114–134 (ITQF…LVTA), 140–160 (LFIG…WWYG), 171–191 (AILY…WFLF), 213–233 (LMGL…HPWL), 241–261 (TPVS…FLLI), 273–293 (VQTF…ICAL), 301–320 (IIAF…IGIN), 325–347 (AFLH…GSII), 366–386 (MPFT…MPFL), 409–429 (LLIT…MIFF), 457–477 (LLIG…PTTI), 488–508 (LTAL…SLAT), and 583–603 (LIKL…LLLM).

Belongs to the complex I subunit 5 family. In terms of assembly, core subunit of respiratory chain NADH dehydrogenase (Complex I) which is composed of 45 different subunits.

It localises to the mitochondrion inner membrane. It carries out the reaction a ubiquinone + NADH + 5 H(+)(in) = a ubiquinol + NAD(+) + 4 H(+)(out). Functionally, core subunit of the mitochondrial membrane respiratory chain NADH dehydrogenase (Complex I) which catalyzes electron transfer from NADH through the respiratory chain, using ubiquinone as an electron acceptor. Essential for the catalytic activity and assembly of complex I. The polypeptide is NADH-ubiquinone oxidoreductase chain 5 (MT-ND5) (Ceratotherium simum (White rhinoceros)).